A 571-amino-acid polypeptide reads, in one-letter code: Asparagine--tRNA ligase, cytoplasmic 3 (571 aa).

At Gly2 the chain carries N-acetylglycine. The OB DNA-binding region spans 50 to 128 (VRIGGWVKTG…QSIELSVETV (79 aa)). Residues 233–289 (DVEAARLIVKERGEAVAQLKVAKASKEEITASVAQLSVAKASLAHVEERLRLKPGLP) form the WHEP-TRS domain.

It belongs to the class-II aminoacyl-tRNA synthetase family.

It localises to the cytoplasm. It is found in the cytosol. It catalyses the reaction tRNA(Asn) + L-asparagine + ATP = L-asparaginyl-tRNA(Asn) + AMP + diphosphate + H(+). The protein is Asparagine--tRNA ligase, cytoplasmic 3 of Arabidopsis thaliana (Mouse-ear cress).